A 365-amino-acid chain; its full sequence is tRNA/tmRNA (uracil-C(5))-methyltransferase (365 aa).

S-adenosyl-L-methionine is bound by residues glutamine 189, tyrosine 217, asparagine 222, glutamate 238, and aspartate 298. Cysteine 323 acts as the Nucleophile in catalysis. Glutamate 357 (proton acceptor) is an active-site residue.

This sequence belongs to the class I-like SAM-binding methyltransferase superfamily. RNA M5U methyltransferase family. TrmA subfamily.

The enzyme catalyses uridine(54) in tRNA + S-adenosyl-L-methionine = 5-methyluridine(54) in tRNA + S-adenosyl-L-homocysteine + H(+). It catalyses the reaction uridine(341) in tmRNA + S-adenosyl-L-methionine = 5-methyluridine(341) in tmRNA + S-adenosyl-L-homocysteine + H(+). Its function is as follows. Dual-specificity methyltransferase that catalyzes the formation of 5-methyluridine at position 54 (m5U54) in all tRNAs, and that of position 341 (m5U341) in tmRNA (transfer-mRNA). This chain is tRNA/tmRNA (uracil-C(5))-methyltransferase, found in Shewanella woodyi (strain ATCC 51908 / MS32).